The primary structure comprises 579 residues: V-type ATP synthase alpha chain (579 aa).

238 to 245 lines the ATP pocket; it reads GPFGAGKT.

Belongs to the ATPase alpha/beta chains family.

The enzyme catalyses ATP + H2O + 4 H(+)(in) = ADP + phosphate + 5 H(+)(out). Produces ATP from ADP in the presence of a proton gradient across the membrane. The V-type alpha chain is a catalytic subunit. The chain is V-type ATP synthase alpha chain from Borrelia hermsii (strain HS1 / DAH).